The following is a 174-amino-acid chain: Ribosome maturation factor RimM (174 aa).

Positions 95-174 constitute a PRC barrel domain; sequence DDEFYWRDLI…QIQVEWPSDF (80 aa).

Belongs to the RimM family. Binds ribosomal protein uS19.

It is found in the cytoplasm. An accessory protein needed during the final step in the assembly of 30S ribosomal subunit, possibly for assembly of the head region. Essential for efficient processing of 16S rRNA. May be needed both before and after RbfA during the maturation of 16S rRNA. It has affinity for free ribosomal 30S subunits but not for 70S ribosomes. The sequence is that of Ribosome maturation factor RimM from Idiomarina loihiensis (strain ATCC BAA-735 / DSM 15497 / L2-TR).